Consider the following 326-residue polypeptide: 4-hydroxythreonine-4-phosphate dehydrogenase (326 aa).

The substrate site is built by His133 and Thr134. Positions 163, 208, and 263 each coordinate a divalent metal cation. Substrate-binding residues include Lys271, Asn280, and Arg289.

It belongs to the PdxA family. Homodimer. Requires Zn(2+) as cofactor. It depends on Mg(2+) as a cofactor. The cofactor is Co(2+).

Its subcellular location is the cytoplasm. The enzyme catalyses 4-(phosphooxy)-L-threonine + NAD(+) = 3-amino-2-oxopropyl phosphate + CO2 + NADH. It functions in the pathway cofactor biosynthesis; pyridoxine 5'-phosphate biosynthesis; pyridoxine 5'-phosphate from D-erythrose 4-phosphate: step 4/5. Functionally, catalyzes the NAD(P)-dependent oxidation of 4-(phosphooxy)-L-threonine (HTP) into 2-amino-3-oxo-4-(phosphooxy)butyric acid which spontaneously decarboxylates to form 3-amino-2-oxopropyl phosphate (AHAP). This chain is 4-hydroxythreonine-4-phosphate dehydrogenase, found in Pseudoalteromonas atlantica (strain T6c / ATCC BAA-1087).